Consider the following 683-residue polypeptide: Translation initiation factor IF-2 (683 aa).

In terms of domain architecture, tr-type G spans Lys-182–Lys-351. Residues Gly-191–Thr-198 are G1. A GTP-binding site is contributed by Gly-191–Thr-198. A G2 region spans residues Gly-216–His-220. A G3 region spans residues Asp-237–Gly-240. GTP contacts are provided by residues Asp-237–His-241 and Asn-291–Asp-294. Residues Asn-291–Asp-294 are G4. A G5 region spans residues Ser-327–His-329.

Belongs to the TRAFAC class translation factor GTPase superfamily. Classic translation factor GTPase family. IF-2 subfamily.

It is found in the cytoplasm. Its function is as follows. One of the essential components for the initiation of protein synthesis. Protects formylmethionyl-tRNA from spontaneous hydrolysis and promotes its binding to the 30S ribosomal subunits. Also involved in the hydrolysis of GTP during the formation of the 70S ribosomal complex. This chain is Translation initiation factor IF-2, found in Clostridium novyi (strain NT).